The primary structure comprises 46 residues: Bottromycin D (46 aa).

Residues 10–46 (MTADFLNDDPNNAELSSLEMEELESWGAWSDDTDQSV) constitute a propeptide that is removed on maturation.

Post-translationally, the precursor peptide is first ribosomally synthesized and then highly tailored by specific enzymes to yield the final natural product. These modifications include several methylations, cyclization and the formation of t-Leu and Thia-beta-Ala residues.

It localises to the secreted. In terms of biological role, bottromycin D is a ribosomally synthesized and post-translationally modified peptide (RiPP) that displays antibiotic activity against methicillin-resistant S.aureus (MRSA). The chain is Bottromycin D from Streptomyces sp.